A 603-amino-acid chain; its full sequence is Probable HECT-type ubiquitin ligase-interacting protein creD (603 aa).

Disordered stretches follow at residues 375–398 (ELDP…GTLS) and 432–499 (LNIT…MATP). Residues 443 to 455 (TDHESQNDSEHRR) are compositionally biased toward basic and acidic residues. Low complexity predominate over residues 465–481 (PSSGSNSHSPSSPVLSR). Basic and acidic residues predominate over residues 482–492 (RPSDEVDHEHV).

The protein belongs to the arrestin family. Interacts with hulA.

Functionally, component of the regulatory network controlling carbon source utilization through ubiquitination and deubiquitination involving creA, creB, creC, creD and acrB. May be involved in signaling by recognizing appropriately phosphorylated substrates via its arrestin domains and then recruit a HECT-type ubiquitin ligase such as hulA, leading to ubiquitination of the substrate, providing a link between ubiquitination and phosphorylation in protein regulation and stability. This chain is Probable HECT-type ubiquitin ligase-interacting protein creD (creD), found in Aspergillus flavus (strain ATCC 200026 / FGSC A1120 / IAM 13836 / NRRL 3357 / JCM 12722 / SRRC 167).